Consider the following 235-residue polypeptide: Lipoprotein-releasing system ATP-binding protein LolD (235 aa).

An ABC transporter domain is found at 13-235 (LCCSNIIKRY…SNGMLKISTI (223 aa)). An ATP-binding site is contributed by 49–56 (GASGSGKS).

Belongs to the ABC transporter superfamily. Lipoprotein translocase (TC 3.A.1.125) family. As to quaternary structure, the complex is composed of two ATP-binding proteins (LolD) and two transmembrane proteins (LolC and LolE).

It localises to the cell inner membrane. Its function is as follows. Part of the ABC transporter complex LolCDE involved in the translocation of mature outer membrane-directed lipoproteins, from the inner membrane to the periplasmic chaperone, LolA. Responsible for the formation of the LolA-lipoprotein complex in an ATP-dependent manner. This is Lipoprotein-releasing system ATP-binding protein LolD from Blochmanniella floridana.